Consider the following 272-residue polypeptide: Energy-coupling factor transporter ATP-binding protein EcfA1 (272 aa).

In terms of domain architecture, ABC transporter spans 2–237; the sequence is IKVSDVCFSY…KNIIEKAKID (236 aa). Position 37–44 (37–44) interacts with ATP; the sequence is GHNGSGKS.

Belongs to the ABC transporter superfamily. Energy-coupling factor EcfA family. Forms a stable energy-coupling factor (ECF) transporter complex composed of 2 membrane-embedded substrate-binding proteins (S component), 2 ATP-binding proteins (A component) and 2 transmembrane proteins (T component).

It localises to the cell membrane. Functionally, ATP-binding (A) component of a common energy-coupling factor (ECF) ABC-transporter complex. Unlike classic ABC transporters this ECF transporter provides the energy necessary to transport a number of different substrates. The protein is Energy-coupling factor transporter ATP-binding protein EcfA1 of Mesomycoplasma hyopneumoniae (strain J / ATCC 25934 / NCTC 10110) (Mycoplasma hyopneumoniae).